The sequence spans 456 residues: Exodeoxyribonuclease 7 large subunit (456 aa).

It belongs to the XseA family. Heterooligomer composed of large and small subunits.

The protein resides in the cytoplasm. The catalysed reaction is Exonucleolytic cleavage in either 5'- to 3'- or 3'- to 5'-direction to yield nucleoside 5'-phosphates.. Bidirectionally degrades single-stranded DNA into large acid-insoluble oligonucleotides, which are then degraded further into small acid-soluble oligonucleotides. The sequence is that of Exodeoxyribonuclease 7 large subunit from Lactobacillus gasseri (strain ATCC 33323 / DSM 20243 / BCRC 14619 / CIP 102991 / JCM 1131 / KCTC 3163 / NCIMB 11718 / NCTC 13722 / AM63).